Reading from the N-terminus, the 414-residue chain is Tryptophan synthase beta chain (414 aa).

An N6-(pyridoxal phosphate)lysine modification is found at lysine 105.

This sequence belongs to the TrpB family. Tetramer of two alpha and two beta chains. Requires pyridoxal 5'-phosphate as cofactor.

The enzyme catalyses (1S,2R)-1-C-(indol-3-yl)glycerol 3-phosphate + L-serine = D-glyceraldehyde 3-phosphate + L-tryptophan + H2O. Its pathway is amino-acid biosynthesis; L-tryptophan biosynthesis; L-tryptophan from chorismate: step 5/5. In terms of biological role, the beta subunit is responsible for the synthesis of L-tryptophan from indole and L-serine. This is Tryptophan synthase beta chain from Gloeobacter violaceus (strain ATCC 29082 / PCC 7421).